A 250-amino-acid polypeptide reads, in one-letter code: Ubiquinone/menaquinone biosynthesis C-methyltransferase UbiE (250 aa).

S-adenosyl-L-methionine is bound by residues Ser-73, Asp-94, and 122–123; that span reads NA.

This sequence belongs to the class I-like SAM-binding methyltransferase superfamily. MenG/UbiE family.

The catalysed reaction is a 2-demethylmenaquinol + S-adenosyl-L-methionine = a menaquinol + S-adenosyl-L-homocysteine + H(+). It carries out the reaction a 2-methoxy-6-(all-trans-polyprenyl)benzene-1,4-diol + S-adenosyl-L-methionine = a 5-methoxy-2-methyl-3-(all-trans-polyprenyl)benzene-1,4-diol + S-adenosyl-L-homocysteine + H(+). It participates in quinol/quinone metabolism; menaquinone biosynthesis; menaquinol from 1,4-dihydroxy-2-naphthoate: step 2/2. The protein operates within cofactor biosynthesis; ubiquinone biosynthesis. Its function is as follows. Methyltransferase required for the conversion of demethylmenaquinol (DMKH2) to menaquinol (MKH2) and the conversion of 2-polyprenyl-6-methoxy-1,4-benzoquinol (DDMQH2) to 2-polyprenyl-3-methyl-6-methoxy-1,4-benzoquinol (DMQH2). The protein is Ubiquinone/menaquinone biosynthesis C-methyltransferase UbiE of Legionella pneumophila (strain Lens).